Consider the following 676-residue polypeptide: Urocanate hydratase (676 aa).

NAD(+)-binding positions include G126–G127, Q204, G251–S253, E271, N317–V318, Q343–H347, Y354–Y355, and Y403. N6-succinyllysine is present on K534. G594 serves as a coordination point for NAD(+).

This sequence belongs to the urocanase family. It depends on NAD(+) as a cofactor.

It carries out the reaction 4-imidazolone-5-propanoate = trans-urocanate + H2O. It participates in amino-acid degradation; L-histidine degradation into L-glutamate; N-formimidoyl-L-glutamate from L-histidine: step 2/3. In Mus musculus (Mouse), this protein is Urocanate hydratase (Uroc1).